Reading from the N-terminus, the 353-residue chain is Mitochondrial glutathione transporter SLC25A40 (353 aa).

Solcar repeat units follow at residues 14-132 (ITPF…LFAL), 140-224 (RSDL…GKWW), and 234-328 (PTVA…GKAF). 6 consecutive transmembrane segments (helical) span residues 20 to 40 (MMASCSGAIITSLLVTPLDVV), 104 to 124 (LWSGLPPTLIMAVPATVIYFT), 143 to 163 (LAPLFAGAIARVGSATVISPL), 200 to 221 (WGPTLLRDVPFSAMYWFNYEKG), 237 to 257 (AITFTAGALSGSIASIITLPF), and 299 to 319 (GLFAGFMPRLIKVAPACAIMI).

It belongs to the mitochondrial carrier (TC 2.A.29) family.

The protein localises to the mitochondrion inner membrane. It catalyses the reaction glutathione(in) = glutathione(out). Probable mitochondrial transporter required for glutathione import into mitochondria. Glutathione, which plays key roles in oxidative metabolism, is produced exclusively in the cytosol and is imported in many organelles. Mitochondrial glutathione is required for the activity and stability of proteins containing iron-sulfur clusters. This Danio rerio (Zebrafish) protein is Mitochondrial glutathione transporter SLC25A40.